The following is a 171-amino-acid chain: Homeobox protein engrailed-1-B (171 aa).

2 disordered regions span residues 1–41 and 60–86; these read EDPG…NAAP and YSDR…KRPR. Residues 15–29 show a composition bias toward low complexity; sequence PDSDTPSDSSKGSDS. The segment at residues 82-141 is a DNA-binding region (homeobox); that stretch reads DKRPRTAFTAEQLQRLKAEFQANRYITEQRRQTLAQELSLNESQIKIWFQNKRAKIKKAS.

This sequence belongs to the engrailed homeobox family.

It is found in the nucleus. Functionally, required for proper formation of the apical ectodermal ridge and correct dorsal-ventral patterning in the limb. This chain is Homeobox protein engrailed-1-B (en1-b), found in Xenopus laevis (African clawed frog).